The sequence spans 178 residues: Interleukin-10 (178 aa).

The first 18 residues, methionine 1–alanine 18, serve as a signal peptide directing secretion. Disulfide bonds link cysteine 30/cysteine 126 and cysteine 80/cysteine 132. A glycan (N-linked (GlcNAc...) asparagine) is linked at asparagine 134.

Belongs to the IL-10 family. As to quaternary structure, homodimer. Interacts with IL10RA and IL10RB. Produced by a variety of cell lines, including T-cells, macrophages, mast cells and other cell types.

The protein resides in the secreted. Its function is as follows. Major immune regulatory cytokine that acts on many cells of the immune system where it has profound anti-inflammatory functions, limiting excessive tissue disruption caused by inflammation. Mechanistically, IL10 binds to its heterotetrameric receptor comprising IL10RA and IL10RB leading to JAK1 and STAT2-mediated phosphorylation of STAT3. In turn, STAT3 translocates to the nucleus where it drives expression of anti-inflammatory mediators. Targets antigen-presenting cells (APCs) such as macrophages and monocytes and inhibits their release of pro-inflammatory cytokines including granulocyte-macrophage colony-stimulating factor /GM-CSF, granulocyte colony-stimulating factor/G-CSF, IL-1 alpha, IL-1 beta, IL-6, IL-8 and TNF-alpha. Also interferes with antigen presentation by reducing the expression of MHC-class II and co-stimulatory molecules, thereby inhibiting their ability to induce T cell activation. In addition, controls the inflammatory response of macrophages by reprogramming essential metabolic pathways including mTOR signaling. In Homo sapiens (Human), this protein is Interleukin-10 (IL10).